The following is a 215-amino-acid chain: Proteasome subunit beta inpE (215 aa).

This sequence belongs to the peptidase T1B family.

It is found in the cytoplasm. Its subcellular location is the nucleus. It carries out the reaction Cleavage of peptide bonds with very broad specificity.. Functionally, proteasome subunit beta type-6; part of the inp gene cluster that mediates the biosynthesis of fellutamide B, a mycotoxin that acts as a proteasome inhibitor. In the first step of fellutabmide B biosynthesis inpC activates 3-hydroxydodecanoic acid to generate 3-hydroxydodecanoyl-AMP that is then loaded onto the T0 domain of inpB. The 3-hydroxydodecanoyl-S-phosphopantetheinyl-T0 is sequentially extended with L-Asn and L-Gln by the two CAT modules of inpB. The linear lipodipeptide from inpB is then transferred onto inpA for the addition of the third amino acid, L-Leu. Reductive releasing of the lipotripeptide by the TE domain of inpA produces (2S)-fellutamide B. InpF might be involved in the release and transfer of the lipodipeptide from inpB to inpA. The inp cluster-encoded proteasome subunit inpE confers resistance to internally produced fellutamides. The MFS efflux transporter inpD may contribute to fellutamide resistance as well. In Emericella nidulans (strain FGSC A4 / ATCC 38163 / CBS 112.46 / NRRL 194 / M139) (Aspergillus nidulans), this protein is Proteasome subunit beta inpE (inpE).